Reading from the N-terminus, the 100-residue chain is Urease subunit gamma (100 aa).

It belongs to the urease gamma subunit family. As to quaternary structure, heterotrimer of UreA (gamma), UreB (beta) and UreC (alpha) subunits. Three heterotrimers associate to form the active enzyme.

Its subcellular location is the cytoplasm. It catalyses the reaction urea + 2 H2O + H(+) = hydrogencarbonate + 2 NH4(+). Its pathway is nitrogen metabolism; urea degradation; CO(2) and NH(3) from urea (urease route): step 1/1. This Burkholderia orbicola (strain MC0-3) protein is Urease subunit gamma.